We begin with the raw amino-acid sequence, 533 residues long: Early growth response protein 1 (533 aa).

Disordered stretches follow at residues 1 to 94 and 161 to 237; these read MAAA…EQPY and MTNP…PPPA. Gly residues predominate over residues 68–77; that stretch reads SGGGGGGGSN. Over residues 164–189 the composition is skewed to low complexity; sequence PPTSSSSAPSPAASSSSSASQSPPLS. A Glycyl lysine isopeptide (Lys-Gly) (interchain with G-Cter in SUMO2) cross-link involves residue Lys303. The tract at residues 316-336 is disordered; the sequence is PSRMRKYPNRPSKTPPHERPY. 3 C2H2-type zinc fingers span residues 336-360, 366-388, and 394-416; these read YACP…IRIH, FQCR…IRTH, and FACD…TKIH. The segment at 407-478 is disordered; sequence DERKRHTKIH…SSTYPSPAHS (72 aa). Over residues 411-421 the composition is skewed to basic residues; sequence RHTKIHLRQKD. The segment covering 427-475 has biased composition (low complexity); sequence SVVASPAASSLSSYPSPVATSYPSPATTSFPSPVPTSYSSPGSSTYPSP.

This sequence belongs to the EGR C2H2-type zinc-finger protein family. In terms of assembly, interacts with SNAI1 and SP1 upon 12-O-tetradecanoylphorbol-13-acetate (TPA) induction. As to expression, detected in lung vasculature and in mononuclear phagocytes. Detected in liver (at protein level). Expressed in the liver in a circadian manner.

Its subcellular location is the nucleus. It is found in the cytoplasm. Its function is as follows. Transcriptional regulator. Recognizes and binds to the DNA sequence 5'-GCG(T/G)GGGCG-3'(EGR-site) in the promoter region of target genes. Binds double-stranded target DNA, irrespective of the cytosine methylation status. Regulates the transcription of numerous target genes, and thereby plays an important role in regulating the response to growth factors, DNA damage, and ischemia. Plays a role in the regulation of cell survival, proliferation and cell death. Activates expression of p53/TP53 and TGFB1, and thereby helps prevent tumor formation. Required for normal progress through mitosis and normal proliferation of hepatocytes after partial hepatectomy. Mediates responses to ischemia and hypoxia; regulates the expression of proteins such as IL1B and CXCL2 that are involved in inflammatory processes and development of tissue damage after ischemia. Regulates biosynthesis of luteinizing hormone (LHB) in the pituitary. Regulates the amplitude of the expression rhythms of clock genes: BMAL1, PER2 and NR1D1 in the liver via the activation of PER1 (clock repressor) transcription. Regulates the rhythmic expression of core-clock gene BMAL1 in the suprachiasmatic nucleus (SCN). The sequence is that of Early growth response protein 1 (Egr1) from Mus musculus (Mouse).